We begin with the raw amino-acid sequence, 475 residues long: Sulfate adenylyltransferase subunit 1 (475 aa).

The 215-residue stretch at 25–239 (KSLLRFLTCG…EVLETVEIQR (215 aa)) folds into the tr-type G domain. Residues 34–41 (GSVDDGKS) form a G1 region. Residue 34-41 (GSVDDGKS) coordinates GTP. Positions 92-96 (GITID) are G2. The tract at residues 113-116 (DTPG) is G3. Residues 113–117 (DTPGH) and 168–171 (NKMD) contribute to the GTP site. The G4 stretch occupies residues 168 to 171 (NKMD). The tract at residues 206–208 (SAL) is G5.

This sequence belongs to the TRAFAC class translation factor GTPase superfamily. Classic translation factor GTPase family. CysN/NodQ subfamily. As to quaternary structure, heterodimer composed of CysD, the smaller subunit, and CysN.

The catalysed reaction is sulfate + ATP + H(+) = adenosine 5'-phosphosulfate + diphosphate. Its pathway is sulfur metabolism; hydrogen sulfide biosynthesis; sulfite from sulfate: step 1/3. Its function is as follows. With CysD forms the ATP sulfurylase (ATPS) that catalyzes the adenylation of sulfate producing adenosine 5'-phosphosulfate (APS) and diphosphate, the first enzymatic step in sulfur assimilation pathway. APS synthesis involves the formation of a high-energy phosphoric-sulfuric acid anhydride bond driven by GTP hydrolysis by CysN coupled to ATP hydrolysis by CysD. This Shigella boydii serotype 18 (strain CDC 3083-94 / BS512) protein is Sulfate adenylyltransferase subunit 1.